A 510-amino-acid polypeptide reads, in one-letter code: ATP synthase subunit alpha, mitochondrial (510 aa).

171-178 contacts ATP; the sequence is GDRQTGKT.

Belongs to the ATPase alpha/beta chains family. As to quaternary structure, F-type ATPases have 2 components, CF(1) - the catalytic core - and CF(0) - the membrane proton channel. CF(1) has five subunits: alpha(3), beta(3), gamma(1), delta(1), epsilon(1). CF(0) has three main subunits: a, b and c.

It localises to the mitochondrion. Its subcellular location is the mitochondrion inner membrane. Mitochondrial membrane ATP synthase (F(1)F(0) ATP synthase or Complex V) produces ATP from ADP in the presence of a proton gradient across the membrane which is generated by electron transport complexes of the respiratory chain. F-type ATPases consist of two structural domains, F(1) - containing the extramembraneous catalytic core, and F(0) - containing the membrane proton channel, linked together by a central stalk and a peripheral stalk. During catalysis, ATP synthesis in the catalytic domain of F(1) is coupled via a rotary mechanism of the central stalk subunits to proton translocation. Subunits alpha and beta form the catalytic core in F(1). Rotation of the central stalk against the surrounding alpha(3)beta(3) subunits leads to hydrolysis of ATP in three separate catalytic sites on the beta subunits. Subunit alpha does not bear the catalytic high-affinity ATP-binding sites. This is ATP synthase subunit alpha, mitochondrial (ATPA) from Helianthus annuus (Common sunflower).